Here is a 127-residue protein sequence, read N- to C-terminus: MIFRTNYIVIFIVSIFISMLWQPVHLSVFVILIVAWLYVYSRDNEPWVIFGSVIDDSTLVLVLLVLTIGIFLLTDVSRGIVIGVLAGLPVVLVHGMCRRNTEMLFVLEDDEEKVAMNTSSSSLSSSS.

The next 3 membrane-spanning stretches (helical) occupy residues 15–35 (IFIS…LIVA), 53–73 (VIDD…IFLL), and 76–96 (VSRG…VHGM).

It belongs to the PRA1 family.

The protein resides in the endoplasmic reticulum membrane. May be involved in both secretory and endocytic intracellular trafficking in the endosomal/prevacuolar compartments. The protein is PRA1 family protein C (PRA1C) of Arabidopsis thaliana (Mouse-ear cress).